The sequence spans 504 residues: 2-isopropylmalate synthase (504 aa).

The Pyruvate carboxyltransferase domain occupies 6–267; the sequence is IIIFDTTLRD…YTGIISKEIY (262 aa). Residues Asp15, His201, His203, and Asn237 each contribute to the Mn(2+) site. The tract at residues 391-504 is regulatory domain; the sequence is EITDLLQSSG…LNSYLRIHKN (114 aa).

The protein belongs to the alpha-IPM synthase/homocitrate synthase family. LeuA type 1 subfamily. In terms of assembly, homodimer. The cofactor is Mn(2+).

It localises to the cytoplasm. It carries out the reaction 3-methyl-2-oxobutanoate + acetyl-CoA + H2O = (2S)-2-isopropylmalate + CoA + H(+). Its pathway is amino-acid biosynthesis; L-leucine biosynthesis; L-leucine from 3-methyl-2-oxobutanoate: step 1/4. Its function is as follows. Catalyzes the condensation of the acetyl group of acetyl-CoA with 3-methyl-2-oxobutanoate (2-ketoisovalerate) to form 3-carboxy-3-hydroxy-4-methylpentanoate (2-isopropylmalate). This chain is 2-isopropylmalate synthase, found in Campylobacter concisus (strain 13826).